Here is a 236-residue protein sequence, read N- to C-terminus: 2,3,4,5-tetrahydropyridine-2,6-dicarboxylate N-acetyltransferase (236 aa).

Belongs to the transferase hexapeptide repeat family. DapH subfamily.

The catalysed reaction is (S)-2,3,4,5-tetrahydrodipicolinate + acetyl-CoA + H2O = L-2-acetamido-6-oxoheptanedioate + CoA. It participates in amino-acid biosynthesis; L-lysine biosynthesis via DAP pathway; LL-2,6-diaminopimelate from (S)-tetrahydrodipicolinate (acetylase route): step 1/3. Functionally, catalyzes the transfer of an acetyl group from acetyl-CoA to tetrahydrodipicolinate. The sequence is that of 2,3,4,5-tetrahydropyridine-2,6-dicarboxylate N-acetyltransferase from Listeria monocytogenes serotype 4b (strain CLIP80459).